Here is a 245-residue protein sequence, read N- to C-terminus: Probable membrane transporter protein YdhB (245 aa).

The next 8 membrane-spanning stretches (helical) occupy residues 1-21, 34-56, 71-91, 98-118, 137-157, 177-197, 199-219, and 225-245; these read MLII…GAGG, HIPI…LSGA, LIVG…TSFI, YLTA…LFIL, ILGI…APFI, MLVI…EGFV, YVLL…GAKF, and KVVL…LLLF.

Belongs to the 4-toluene sulfonate uptake permease (TSUP) (TC 2.A.102) family.

It localises to the cell membrane. The protein is Probable membrane transporter protein YdhB (ydhB) of Bacillus subtilis (strain 168).